The primary structure comprises 396 residues: 1-deoxy-D-xylulose 5-phosphate reductoisomerase (396 aa).

Residues Thr10, Gly11, Ser12, Ile13, Gly36, Lys37, Asn38, and Asn124 each coordinate NADPH. Residue Lys125 coordinates 1-deoxy-D-xylulose 5-phosphate. Glu126 is an NADPH binding site. Asp150 lines the Mn(2+) pocket. Ser151, Glu152, Ser186, and His209 together coordinate 1-deoxy-D-xylulose 5-phosphate. Position 152 (Glu152) interacts with Mn(2+). An NADPH-binding site is contributed by Gly215. Ser222, Asn227, Lys228, and Glu231 together coordinate 1-deoxy-D-xylulose 5-phosphate. Mn(2+) is bound at residue Glu231.

This sequence belongs to the DXR family. Mg(2+) is required as a cofactor. Mn(2+) serves as cofactor.

The enzyme catalyses 2-C-methyl-D-erythritol 4-phosphate + NADP(+) = 1-deoxy-D-xylulose 5-phosphate + NADPH + H(+). Its pathway is isoprenoid biosynthesis; isopentenyl diphosphate biosynthesis via DXP pathway; isopentenyl diphosphate from 1-deoxy-D-xylulose 5-phosphate: step 1/6. Its function is as follows. Catalyzes the NADPH-dependent rearrangement and reduction of 1-deoxy-D-xylulose-5-phosphate (DXP) to 2-C-methyl-D-erythritol 4-phosphate (MEP). The polypeptide is 1-deoxy-D-xylulose 5-phosphate reductoisomerase (Glaesserella parasuis serovar 5 (strain SH0165) (Haemophilus parasuis)).